Here is an 89-residue protein sequence, read N- to C-terminus: Small ribosomal subunit protein uS15 (89 aa).

Belongs to the universal ribosomal protein uS15 family. In terms of assembly, part of the 30S ribosomal subunit. Forms a bridge to the 50S subunit in the 70S ribosome, contacting the 23S rRNA.

Its function is as follows. One of the primary rRNA binding proteins, it binds directly to 16S rRNA where it helps nucleate assembly of the platform of the 30S subunit by binding and bridging several RNA helices of the 16S rRNA. Forms an intersubunit bridge (bridge B4) with the 23S rRNA of the 50S subunit in the ribosome. This Streptococcus thermophilus (strain CNRZ 1066) protein is Small ribosomal subunit protein uS15.